Reading from the N-terminus, the 303-residue chain is E3 ubiquitin-protein ligase SINA-like 3 (303 aa).

The interval 1 to 30 (MENITNNSERSLDRPKRQRPVSMENVGGTA) is disordered. The RING-type zinc finger occupies 49 to 85 (CPICYHKLGAPIYQCDNGHIACSSCCKKVKYKCPYCS). Residues 99–286 (IVEAVVVSCP…MSIPYYLLDE (188 aa)) form an SBD region. Residues 102 to 162 (AVVVSCPNAK…LYRHYHAEHK (61 aa)) form an SIAH-type zinc finger. Zn(2+) contacts are provided by cysteine 107, cysteine 114, histidine 128, cysteine 132, cysteine 139, cysteine 144, histidine 156, and histidine 161.

Belongs to the SINA (Seven in absentia) family.

It carries out the reaction S-ubiquitinyl-[E2 ubiquitin-conjugating enzyme]-L-cysteine + [acceptor protein]-L-lysine = [E2 ubiquitin-conjugating enzyme]-L-cysteine + N(6)-ubiquitinyl-[acceptor protein]-L-lysine.. It functions in the pathway protein modification; protein ubiquitination. In terms of biological role, E3 ubiquitin-protein ligase that mediates ubiquitination and subsequent proteasomal degradation of target proteins. E3 ubiquitin ligases accept ubiquitin from an E2 ubiquitin-conjugating enzyme in the form of a thioester and then directly transfers the ubiquitin to targeted substrates. It probably triggers the ubiquitin-mediated degradation of different substrates. This Arabidopsis thaliana (Mouse-ear cress) protein is E3 ubiquitin-protein ligase SINA-like 3.